We begin with the raw amino-acid sequence, 322 residues long: 4-hydroxy-3-methylbut-2-enyl diphosphate reductase 1 (322 aa).

Cys18 provides a ligand contact to [4Fe-4S] cluster. Positions 47 and 82 each coordinate (2E)-4-hydroxy-3-methylbut-2-enyl diphosphate. Residues His47 and His82 each contribute to the dimethylallyl diphosphate site. Isopentenyl diphosphate is bound by residues His47 and His82. Cys104 contacts [4Fe-4S] cluster. His132 provides a ligand contact to (2E)-4-hydroxy-3-methylbut-2-enyl diphosphate. His132 contributes to the dimethylallyl diphosphate binding site. His132 serves as a coordination point for isopentenyl diphosphate. Glu134 functions as the Proton donor in the catalytic mechanism. Position 173 (Thr173) interacts with (2E)-4-hydroxy-3-methylbut-2-enyl diphosphate. Residue Cys203 coordinates [4Fe-4S] cluster. (2E)-4-hydroxy-3-methylbut-2-enyl diphosphate contacts are provided by Ser231, Ser232, Asn233, and Ser276. The dimethylallyl diphosphate site is built by Ser231, Ser232, Asn233, and Ser276. The isopentenyl diphosphate site is built by Ser231, Ser232, Asn233, and Ser276.

Belongs to the IspH family. Requires [4Fe-4S] cluster as cofactor.

The enzyme catalyses isopentenyl diphosphate + 2 oxidized [2Fe-2S]-[ferredoxin] + H2O = (2E)-4-hydroxy-3-methylbut-2-enyl diphosphate + 2 reduced [2Fe-2S]-[ferredoxin] + 2 H(+). It carries out the reaction dimethylallyl diphosphate + 2 oxidized [2Fe-2S]-[ferredoxin] + H2O = (2E)-4-hydroxy-3-methylbut-2-enyl diphosphate + 2 reduced [2Fe-2S]-[ferredoxin] + 2 H(+). It participates in isoprenoid biosynthesis; dimethylallyl diphosphate biosynthesis; dimethylallyl diphosphate from (2E)-4-hydroxy-3-methylbutenyl diphosphate: step 1/1. Its pathway is isoprenoid biosynthesis; isopentenyl diphosphate biosynthesis via DXP pathway; isopentenyl diphosphate from 1-deoxy-D-xylulose 5-phosphate: step 6/6. Functionally, catalyzes the conversion of 1-hydroxy-2-methyl-2-(E)-butenyl 4-diphosphate (HMBPP) into a mixture of isopentenyl diphosphate (IPP) and dimethylallyl diphosphate (DMAPP). Acts in the terminal step of the DOXP/MEP pathway for isoprenoid precursor biosynthesis. The polypeptide is 4-hydroxy-3-methylbut-2-enyl diphosphate reductase 1 (Bradyrhizobium diazoefficiens (strain JCM 10833 / BCRC 13528 / IAM 13628 / NBRC 14792 / USDA 110)).